Here is a 1857-residue protein sequence, read N- to C-terminus: Ankyrin repeat domain-containing protein 31 (1857 aa).

2 disordered regions span residues 1 to 30 and 195 to 215; these read MENG…EDEE and SEPG…DEES. Over residues 195–207 the composition is skewed to polar residues; the sequence is SEPGEEVTQTMTS. ANK repeat units follow at residues 475–504, 508–537, and 541–570; these read FGEN…NVNQ, DGWT…DVNV, and YQIT…DPLF. The segment covering 676–691 has biased composition (polar residues); the sequence is KFGKSNLNSVKNSRTN. 5 disordered regions span residues 676–711, 813–844, 995–1038, 1046–1065, and 1075–1137; these read KFGK…VDDR, VTTH…KGKA, RDSS…TVVH, KAEK…NTDF, and ANSS…QNFR. The span at 692 to 704 shows a compositional bias: basic residues; the sequence is VSKRKGQKNRQQK. The segment covering 814–839 has biased composition (polar residues); sequence TTHQQPHTNQEQYSSPYKSLGNNSSN. Residues 1008–1019 are compositionally biased toward basic and acidic residues; that stretch reads SLERKQDTDKNY. Residues 1023-1032 are compositionally biased toward polar residues; it reads GPNTSSSSRP. Positions 1082–1136 are enriched in basic and acidic residues; sequence QRKEKENVRKSDAELTHNDSEAERTLKSCEEKKKNMDSETHSPCDIQEHRKDQNF. ANK repeat units follow at residues 1162 to 1191, 1195 to 1224, and 1228 to 1257; these read KGES…DVNL, AGWT…NVNC, and DGIV…NPNQ. Disordered stretches follow at residues 1457 to 1479, 1540 to 1570, 1609 to 1640, and 1663 to 1697; these read NSDI…AHAQ, GGLL…AENS, DPHS…AEPL, and AAAA…TTPR. Residues 1555-1570 are compositionally biased toward polar residues; that stretch reads ASSSQPAALTPHAENS. Residues 1663–1683 show a composition bias toward low complexity; sequence AAAASHTDSTQSSLSSASAHQ. The RAMA domain maps to 1687–1782; it reads KTVPHRNTTP…TYLGRELVKC (96 aa).

In terms of assembly, interacts with REC114; the interaction is direct. Interacts with IHO1. In terms of tissue distribution, present in meiotic cells (at protein level).

It is found in the nucleus. Its subcellular location is the chromosome. Its function is as follows. Required for DNA double-strand breaks (DSBs) formation during meiotic recombination. Regulates the spatial and temporal patterns of pre-DSB recombinosome assembly and recombination activity by acting as a scaffold that anchors REC114 and other factors to specific genomic locations, thereby regulating DSB formation. Plays a key role in recombination in the pseudoautosomal regions of sex chromosomes. The protein is Ankyrin repeat domain-containing protein 31 of Mus musculus (Mouse).